Here is a 478-residue protein sequence, read N- to C-terminus: NADH-ubiquinone oxidoreductase 49 kDa subunit, mitochondrial (478 aa).

A mitochondrion-targeting transit peptide spans 1 to 42 (MATTLFRLAGRNAKRHCMRQSTTIAHNLNSTRAFSASALRRY). [4Fe-4S] cluster is bound by residues cysteine 341, cysteine 347, and cysteine 362.

Belongs to the complex I 49 kDa subunit family. As to quaternary structure, complex I is composed of about 40 different subunits. The cofactor is [4Fe-4S] cluster.

It is found in the mitochondrion inner membrane. It carries out the reaction a ubiquinone + NADH + 5 H(+)(in) = a ubiquinol + NAD(+) + 4 H(+)(out). In terms of biological role, core subunit of the mitochondrial membrane respiratory chain NADH dehydrogenase (Complex I) that is believed to belong to the minimal assembly required for catalysis. Complex I functions in the transfer of electrons from NADH to the respiratory chain. The immediate electron acceptor for the enzyme is believed to be ubiquinone. The protein is NADH-ubiquinone oxidoreductase 49 kDa subunit, mitochondrial (nuo-49) of Neurospora crassa (strain ATCC 24698 / 74-OR23-1A / CBS 708.71 / DSM 1257 / FGSC 987).